The primary structure comprises 530 residues: Ubiquitin carboxyl-terminal hydrolase 17-like protein 20 (530 aa).

Positions 80-375 (AGLQNMGNTC…QAYVLFYIQK (296 aa)) constitute a USP domain. Cys89 functions as the Nucleophile in the catalytic mechanism. Residue His334 is the Proton acceptor of the active site. Composition is skewed to basic and acidic residues over residues 382-392 (SESVSRGREPR) and 398-413 (DTDR…RDHP). 2 disordered regions span residues 382–413 (SESV…RDHP) and 509–530 (RGRA…LVCQ). A compositionally biased stretch (basic residues) spans 510–524 (GRARRSKGKNKHSKR).

Belongs to the peptidase C19 family. USP17 subfamily.

The protein localises to the nucleus. It is found in the endoplasmic reticulum. The catalysed reaction is Thiol-dependent hydrolysis of ester, thioester, amide, peptide and isopeptide bonds formed by the C-terminal Gly of ubiquitin (a 76-residue protein attached to proteins as an intracellular targeting signal).. Deubiquitinating enzyme that removes conjugated ubiquitin from specific proteins to regulate different cellular processes that may include cell proliferation, progression through the cell cycle, apoptosis, cell migration, and the cellular response to viral infection. The sequence is that of Ubiquitin carboxyl-terminal hydrolase 17-like protein 20 (USP17L20) from Homo sapiens (Human).